A 395-amino-acid chain; its full sequence is Protein NDRG1 (395 aa).

The interval 325–395 (RSRTGSAASS…NTPKSMEISC (71 aa)) is disordered. The segment covering 326-339 (SRTGSAASSSSQDG) has biased composition (low complexity). 4 tandem repeats follow at residues 339–348 (GNRSRSHTNE), 349–358 (GSRSRSHTGD), 359–368 (GNRSRAHTGD), and 369–378 (GNRSRSHTDS). The tract at residues 339–378 (GNRSRSHTNEGSRSRSHTGDGNRSRAHTGDGNRSRSHTDS) is 4 X 10 AA tandem repeats of G-[NS]-R-S-R-[AS]-H-T-[DGN]-[DES]. Residues 345 to 376 (HTNEGSRSRSHTGDGNRSRAHTGDGNRSRSHT) show a composition bias toward basic and acidic residues. Positions 377–389 (DSNNTNSEHNTPK) are enriched in polar residues.

The protein belongs to the NDRG family.

Functionally, may be involved in pronephros development, after specification of the pronephros. This is Protein NDRG1 from Xenopus tropicalis (Western clawed frog).